The following is a 370-amino-acid chain: Molybdenum import ATP-binding protein ModC (370 aa).

One can recognise an ABC transporter domain in the interval Ser-2–Gly-233. Position 31-38 (Gly-31–Thr-38) interacts with ATP. The region spanning Gly-293–Asn-359 is the Mop domain.

The protein belongs to the ABC transporter superfamily. Molybdate importer (TC 3.A.1.8) family. In terms of assembly, the complex is composed of two ATP-binding proteins (ModC), two transmembrane proteins (ModB) and a solute-binding protein (ModA).

Its subcellular location is the cell inner membrane. It carries out the reaction molybdate(out) + ATP + H2O = molybdate(in) + ADP + phosphate + H(+). Part of the ABC transporter complex ModABC involved in molybdenum import. Responsible for energy coupling to the transport system. This chain is Molybdenum import ATP-binding protein ModC, found in Mesorhizobium japonicum (strain LMG 29417 / CECT 9101 / MAFF 303099) (Mesorhizobium loti (strain MAFF 303099)).